Consider the following 943-residue polypeptide: Isoleucine--tRNA ligase (943 aa).

The 'HIGH' region motif lies at proline 59–histidine 69. Glutamate 577 provides a ligand contact to L-isoleucyl-5'-AMP. Positions lysine 618–serine 622 match the 'KMSKS' region motif. An ATP-binding site is contributed by lysine 621. Residues cysteine 906, cysteine 909, cysteine 926, and cysteine 929 each contribute to the Zn(2+) site.

It belongs to the class-I aminoacyl-tRNA synthetase family. IleS type 1 subfamily. Monomer. Zn(2+) serves as cofactor.

Its subcellular location is the cytoplasm. The enzyme catalyses tRNA(Ile) + L-isoleucine + ATP = L-isoleucyl-tRNA(Ile) + AMP + diphosphate. Functionally, catalyzes the attachment of isoleucine to tRNA(Ile). As IleRS can inadvertently accommodate and process structurally similar amino acids such as valine, to avoid such errors it has two additional distinct tRNA(Ile)-dependent editing activities. One activity is designated as 'pretransfer' editing and involves the hydrolysis of activated Val-AMP. The other activity is designated 'posttransfer' editing and involves deacylation of mischarged Val-tRNA(Ile). The chain is Isoleucine--tRNA ligase from Xanthomonas axonopodis pv. citri (strain 306).